The following is a 318-amino-acid chain: Malate dehydrogenase (318 aa).

Residues 10-15 and Asp34 each bind NAD(+); that span reads GGGQIG. Substrate-binding residues include Arg83 and Arg89. NAD(+) contacts are provided by residues Asn96 and 119 to 121; that span reads LSN. Asn121 and Arg152 together coordinate substrate. His176 serves as the catalytic Proton acceptor.

This sequence belongs to the LDH/MDH superfamily. MDH type 3 family.

It carries out the reaction (S)-malate + NAD(+) = oxaloacetate + NADH + H(+). Its function is as follows. Catalyzes the reversible oxidation of malate to oxaloacetate. In Syntrophotalea carbinolica (strain DSM 2380 / NBRC 103641 / GraBd1) (Pelobacter carbinolicus), this protein is Malate dehydrogenase.